A 216-amino-acid chain; its full sequence is Cytidylate kinase (216 aa).

ATP is bound at residue 10-18 (GPAGAGKST).

This sequence belongs to the cytidylate kinase family. Type 1 subfamily.

The protein localises to the cytoplasm. It catalyses the reaction CMP + ATP = CDP + ADP. The enzyme catalyses dCMP + ATP = dCDP + ADP. This chain is Cytidylate kinase, found in Clostridioides difficile (strain 630) (Peptoclostridium difficile).